We begin with the raw amino-acid sequence, 440 residues long: Nuclear hormone receptor family member nhr-130 (440 aa).

The segment at residues 34–110 (LYTCQVCALP…VGMDPGRFQF (77 aa)) is a DNA-binding region (nuclear receptor). 2 consecutive NR C4-type zinc fingers follow at residues 37 to 57 (CQVC…CRAC) and 74 to 93 (CKKQ…CKKC). One can recognise an NR LBD domain in the interval 184–439 (EKPLIARNNL…FSHPEMFEDT (256 aa)).

This sequence belongs to the nuclear hormone receptor family.

It is found in the nucleus. Orphan nuclear receptor. The chain is Nuclear hormone receptor family member nhr-130 (nhr-130) from Caenorhabditis elegans.